A 248-amino-acid chain; its full sequence is Small ribosomal subunit protein uS3 (248 aa).

In terms of domain architecture, KH type-2 spans isoleucine 39–lysine 111. The interval lysine 222–asparagine 248 is disordered.

This sequence belongs to the universal ribosomal protein uS3 family. Part of the 30S ribosomal subunit. Forms a tight complex with proteins S10 and S14.

Functionally, binds the lower part of the 30S subunit head. Binds mRNA in the 70S ribosome, positioning it for translation. The protein is Small ribosomal subunit protein uS3 of Alteracholeplasma palmae (strain ATCC 49389 / J233) (Acholeplasma palmae).